Reading from the N-terminus, the 121-residue chain is Amelogenin (121 aa).

The disordered stretch occupies residues 1-121; the sequence is LHHQIIPVLS…DLPLEPWPAS (121 aa). Composition is skewed to polar residues over residues 10 to 19 and 47 to 59; these read SQHQTPTHAL and HSVTPTQHHQSNL. The segment covering 60–84 has biased composition (low complexity); it reads PQPGQQPFQPQFPQKPTHRPIQPQA. The span at 85 to 121 shows a compositional bias: pro residues; it reads PVHPMPPMPQPQLPPMFPLQPLPPLLPDLPLEPWPAS.

This sequence belongs to the amelogenin family.

It localises to the secreted. The protein resides in the extracellular space. It is found in the extracellular matrix. Its function is as follows. Plays a role in the biomineralization of teeth. Seems to regulate the formation of crystallites during the secretory stage of tooth enamel development. Thought to play a major role in the structural organization and mineralization of developing enamel. This Tachyglossus aculeatus aculeatus (Southeast Australian short-beaked echidna) protein is Amelogenin (AMEL).